We begin with the raw amino-acid sequence, 357 residues long: SUN domain-containing protein 3 (357 aa).

At Met1 to Lys47 the chain is on the nuclear side. The helical transmembrane segment at Ile48–Leu64 threads the bilayer. Topologically, residues Asn65–Ile357 are perinuclear space. The stretch at Arg98 to Asn146 forms a coiled coil. Residues Gly193 to Gly354 enclose the SUN domain.

In terms of assembly, self-associates. Interacts with SYNE1 and SPAG4/SUN4. Proposed to form a spermatogenesis-specific LINC complex with SYNE1 during sperm head formation possibly implicating a SUN domain-based heterotrimer with SPAG4/SUN4 associating with SYNE1.

It is found in the membrane. It localises to the nucleus envelope. Its subcellular location is the nucleus inner membrane. Functionally, as a probable component of the LINC (LInker of Nucleoskeleton and Cytoskeleton) complex, involved in the connection between the nuclear lamina and the cytoskeleton. The nucleocytoplasmic interactions established by the LINC complex play an important role in the transmission of mechanical forces across the nuclear envelope and in nuclear movement and positioning. May be involved in nuclear remodeling during sperm head formation in spermatogenesis. A probable SUN3:SYNE1 LINC complex may tether spermatid nuclei to posterior cytoskeletal structures such as the manchette. This chain is SUN domain-containing protein 3 (SUN3), found in Homo sapiens (Human).